A 719-amino-acid chain; its full sequence is Ribosomal RNA large subunit methyltransferase K/L (719 aa).

A THUMP domain is found at 43–154 (IGYKACLWSR…KGKANITLDL (112 aa)).

It belongs to the methyltransferase superfamily. RlmKL family.

The protein resides in the cytoplasm. The enzyme catalyses guanosine(2445) in 23S rRNA + S-adenosyl-L-methionine = N(2)-methylguanosine(2445) in 23S rRNA + S-adenosyl-L-homocysteine + H(+). It catalyses the reaction guanosine(2069) in 23S rRNA + S-adenosyl-L-methionine = N(2)-methylguanosine(2069) in 23S rRNA + S-adenosyl-L-homocysteine + H(+). Its function is as follows. Specifically methylates the guanine in position 2445 (m2G2445) and the guanine in position 2069 (m7G2069) of 23S rRNA. The chain is Ribosomal RNA large subunit methyltransferase K/L from Aeromonas salmonicida (strain A449).